The sequence spans 195 residues: Molybdenum cofactor guanylyltransferase (195 aa).

GTP contacts are provided by residues 12 to 14 (LAG), Lys25, Asn53, Asp70, and Asp100. Mg(2+) is bound at residue Asp100.

It belongs to the MobA family. As to quaternary structure, monomer. It depends on Mg(2+) as a cofactor.

It localises to the cytoplasm. The catalysed reaction is Mo-molybdopterin + GTP + H(+) = Mo-molybdopterin guanine dinucleotide + diphosphate. Transfers a GMP moiety from GTP to Mo-molybdopterin (Mo-MPT) cofactor (Moco or molybdenum cofactor) to form Mo-molybdopterin guanine dinucleotide (Mo-MGD) cofactor. The protein is Molybdenum cofactor guanylyltransferase of Vibrio vulnificus (strain YJ016).